Here is a 425-residue protein sequence, read N- to C-terminus: Enolase (425 aa).

Residue Gln165 participates in (2R)-2-phosphoglycerate binding. Glu207 serves as the catalytic Proton donor. Mg(2+)-binding residues include Asp244, Glu285, and Asp312. Residues Lys337, Arg366, Ser367, and Lys388 each contribute to the (2R)-2-phosphoglycerate site. The active-site Proton acceptor is Lys337.

It belongs to the enolase family. Mg(2+) serves as cofactor.

It is found in the cytoplasm. It localises to the secreted. The protein resides in the cell surface. The enzyme catalyses (2R)-2-phosphoglycerate = phosphoenolpyruvate + H2O. The protein operates within carbohydrate degradation; glycolysis; pyruvate from D-glyceraldehyde 3-phosphate: step 4/5. In terms of biological role, catalyzes the reversible conversion of 2-phosphoglycerate (2-PG) into phosphoenolpyruvate (PEP). It is essential for the degradation of carbohydrates via glycolysis. The sequence is that of Enolase from Wolbachia sp. subsp. Brugia malayi (strain TRS).